Consider the following 358-residue polypeptide: Reverse gyrase subunit A (358 aa).

A Topo IA-type catalytic domain is found at 1–351; sequence MNATLRIRNR…KLYLELERVV (351 aa). Tyr78 functions as the O-(5'-phospho-DNA)-tyrosine intermediate in the catalytic mechanism.

This sequence belongs to the type IA topoisomerase family. As to quaternary structure, heterodimer of an RgyrA and RgyrB subunit. The topoisomerase domain is shared between the two subunits. Mg(2+) is required as a cofactor.

The protein resides in the cytoplasm. In terms of biological role, modifies the topological state of DNA by introducing positive supercoils in an ATP-dependent process; dATP also allows positive supercoiling. Increases the linking number in steps of +1. Only this subunit binds DNA, in isolation it does not hydrolyze ATP. Hydrolyzes ATP only in the presence of DNA. Transiently cleaves a single DNA strand and remains covalently bound to the 5' DNA end probably through a tyrosine residue. It changes linking number in steps of one, and nicks DNA preferentially at 5'-CNNN | 3'-sites with a strong preference for 4 pyrimidine residues. There are about 1000 heterodimers per cell. May be involved in rewinding the DNA strands in the regions of the chromosome that have opened up to allow transcription or replication. Functionally, reverse gyrase activity is reconstituted after incubation at 80 degrees Celsius for 5 minutes, positive supercoiling requires ATP and Mg(2+). In the presence of ATP it binds and nicks substrate but does not make closed product. The sequence is that of Reverse gyrase subunit A from Methanopyrus kandleri (strain AV19 / DSM 6324 / JCM 9639 / NBRC 100938).